We begin with the raw amino-acid sequence, 222 residues long: Cytochrome b6-f complex iron-sulfur subunit, chloroplastic (222 aa).

A chloroplast-targeting transit peptide spans 1-49 (MASTALSTASNPTQLCRTRASSLCKPVKGLGFGRERIPRNITCMAGSIS). The chain crosses the membrane as a helical span at residues 66–86 (LLGAISLPTFGMLVPYGSFLV). Residues 109–205 (VEDWLKTHGP…ADVDDGKVVF (97 aa)) form the Rieske domain. Residues Cys-151, His-153, Cys-169, and His-172 each contribute to the [2Fe-2S] cluster site. A disulfide bond links Cys-156 and Cys-171.

Belongs to the Rieske iron-sulfur protein family. In terms of assembly, the 4 large subunits of the cytochrome b6-f complex are cytochrome b6, subunit IV (17 kDa polypeptide, petD), cytochrome f and the Rieske protein, while the 4 small subunits are petG, petL, petM and petN. The complex functions as a dimer. The cofactor is [2Fe-2S] cluster.

It is found in the plastid. The protein resides in the chloroplast thylakoid membrane. It carries out the reaction 2 oxidized [plastocyanin] + a plastoquinol + 2 H(+)(in) = 2 reduced [plastocyanin] + a plastoquinone + 4 H(+)(out). Its function is as follows. Component of the cytochrome b6-f complex, which mediates electron transfer between photosystem II (PSII) and photosystem I (PSI), cyclic electron flow around PSI, and state transitions. In Triticum aestivum (Wheat), this protein is Cytochrome b6-f complex iron-sulfur subunit, chloroplastic (petC).